Reading from the N-terminus, the 193-residue chain is Potassium-transporting ATPase KdpC subunit (193 aa).

The helical transmembrane segment at 7–27 threads the bilayer; it reads PLVVLFVILTAVTGLAYPAVM.

This sequence belongs to the KdpC family. As to quaternary structure, the system is composed of three essential subunits: KdpA, KdpB and KdpC.

Its subcellular location is the cell inner membrane. Functionally, part of the high-affinity ATP-driven potassium transport (or Kdp) system, which catalyzes the hydrolysis of ATP coupled with the electrogenic transport of potassium into the cytoplasm. This subunit acts as a catalytic chaperone that increases the ATP-binding affinity of the ATP-hydrolyzing subunit KdpB by the formation of a transient KdpB/KdpC/ATP ternary complex. The polypeptide is Potassium-transporting ATPase KdpC subunit (Burkholderia cenocepacia (strain ATCC BAA-245 / DSM 16553 / LMG 16656 / NCTC 13227 / J2315 / CF5610) (Burkholderia cepacia (strain J2315))).